A 557-amino-acid chain; its full sequence is Vacuolar protein sorting-associated protein 30 (557 aa).

2 disordered regions span residues 93–149 (DDDN…ENQQ) and 218–238 (NKEISESNKEKQYSHNLSEKE). Positions 135 to 147 (DEEEQEATDEDEN) are enriched in acidic residues. Threonine 142 is modified (phosphothreonine). The stretch at 189–322 (LINRLKSEYD…QLDKLRKINI (134 aa)) forms a coiled coil. The BARA stretch occupies residues 320-539 (INIFNATFKI…LAFSSNLLSK (220 aa)). A required for membrane-association, autophagic function during starvation and normal autophagosome morphology region spans residues 515-540 (WTTAMKFLLTNVKWLLAFSSNLLSKS).

It belongs to the beclin family. Component of the autophagy-specific VPS34 PI3-kinase complex I composed of VPS15, VPS30, VPS34, ATG14 and ATG38; and of the VPS34 PI3-kinase complex II composed of VPS15, VPS30, VPS34 and VPS38.

The protein localises to the endosome membrane. Its subcellular location is the vacuole membrane. The protein resides in the preautophagosomal structure membrane. Its function is as follows. Required for cytoplasm to vacuole transport (Cvt), autophagy, nucleophagy, and mitophagy, as a part of the autophagy-specific VPS34 PI3-kinase complex I. This complex is essential to recruit the ATG8-phosphatidylinositol conjugate and the ATG12-ATG5 conjugate to the pre-autophagosomal structure. Also involved in endosome-to-Golgi retrograde transport as part of the VPS34 PI3-kinase complex II. This second complex is required for the endosome-to-Golgi retrieval of PEP1 and KEX2, and the recruitment of VPS5 and VPS7, two components of the retromer complex, to endosomal membranes (probably through the synthesis of a specific pool of phosphatidylinositol 3-phosphate recruiting the retromer to the endosomes). Also plays a role in regulation of filamentous growth. This is Vacuolar protein sorting-associated protein 30 from Saccharomyces cerevisiae (strain ATCC 204508 / S288c) (Baker's yeast).